Here is a 201-residue protein sequence, read N- to C-terminus: Single-stranded DNA-binding protein DdrA (201 aa).

Belongs to the RAD52 family. In terms of assembly, the truncated form (1-160) of DdrA forms heptameric rings that can assemble into a 3-ring structure.

SsDNA-binding protein that contributes to the ionizing radiation resistance of D.deserti. Plays a role in DNA repair and genome reconstitution, in a RecA-independent process, since DdrA is essential for recovery from severe genomic fragmentation as a result of exposure to severe levels of ionizing radiation in an environment lacking nutrients. In vitro, binds to the 3'-ends of single-stranded DNA, and probably protects them from nuclease degradation. Thus, DdrA is part of a DNA end-protection system that helps to preserve genome integrity following irradiation or desiccation. This Deinococcus deserti (strain DSM 17065 / CIP 109153 / LMG 22923 / VCD115) protein is Single-stranded DNA-binding protein DdrA (ddrA).